The sequence spans 60 residues: Potassium channel toxin alpha-KTx 3.6 (60 aa).

The first 22 residues, 1–22 (MKVFFAVLITLFICSMIIGIHG), serve as a signal peptide directing secretion. Disulfide bonds link Cys-29-Cys-49, Cys-35-Cys-54, and Cys-39-Cys-56. Lys-59 is modified (lysine amide).

It belongs to the short scorpion toxin superfamily. Potassium channel inhibitor family. Alpha-KTx 03 subfamily. As to expression, expressed by the venom gland.

The protein localises to the secreted. Its function is as follows. Blocks voltage-gated potassium channels. At 2 uM, blocks rat Kv1.1/KCNA1 and Kv1.3/KCNA3, has a strong effect on rat Kv1.2/KCNA2 and Kv1.6/KCNA6 as well as a moderate effect on Shaker IR. The protein is Potassium channel toxin alpha-KTx 3.6 of Olivierus martensii (Manchurian scorpion).